The primary structure comprises 407 residues: tRNA pseudouridine synthase 4 (407 aa).

The tract at residues 83-105 is disordered; that stretch reads FRPAPPHPNDRNRRRRKSNRLPD. D115 (nucleophile) is an active-site residue. The tract at residues 274–298 is disordered; that stretch reads TEQDINPQDGDEKINAKSPTTNSVT. At S291 the chain carries Phosphoserine. Position 293 is a phosphothreonine (T293). The residue at position 296 (S296) is a Phosphoserine. The residue at position 406 (T406) is a Phosphothreonine.

This sequence belongs to the pseudouridine synthase TruB family.

It localises to the nucleus. The protein localises to the mitochondrion. The catalysed reaction is uridine(55) in tRNA = pseudouridine(55) in tRNA. The enzyme catalyses a uridine in mRNA = a pseudouridine in mRNA. Its function is as follows. Responsible for synthesis of pseudouridine from uracil-55 in the psi GC loop of transfer RNAs. Also catalyzes pseudouridylation of mRNAs with the consensus sequence 5'-GGUUCRA-3'. In Schizosaccharomyces pombe (strain 972 / ATCC 24843) (Fission yeast), this protein is tRNA pseudouridine synthase 4.